The chain runs to 144 residues: Large ribosomal subunit protein uL15 (144 aa).

The tract at residues 1 to 51 (MRLNTIKPGAGSKSAGKRVGRGIGSGLGKTCGRGHKGQKSRAGGFHKVGFE) is disordered. Positions 21-31 (RGIGSGLGKTC) are enriched in gly residues.

It belongs to the universal ribosomal protein uL15 family. Part of the 50S ribosomal subunit.

Binds to the 23S rRNA. The protein is Large ribosomal subunit protein uL15 of Azoarcus sp. (strain BH72).